The primary structure comprises 291 residues: Bis(5'-nucleosyl)-tetraphosphatase, symmetrical (291 aa).

Belongs to the Ap4A hydrolase family.

The enzyme catalyses P(1),P(4)-bis(5'-adenosyl) tetraphosphate + H2O = 2 ADP + 2 H(+). Hydrolyzes diadenosine 5',5'''-P1,P4-tetraphosphate to yield ADP. This Coxiella burnetii (strain CbuG_Q212) (Coxiella burnetii (strain Q212)) protein is Bis(5'-nucleosyl)-tetraphosphatase, symmetrical.